The primary structure comprises 523 residues: GMP synthase [glutamine-hydrolyzing] (523 aa).

The Glutamine amidotransferase type-1 domain occupies Lys-18 to Asp-208. Cys-95 serves as the catalytic Nucleophile. Active-site residues include His-182 and Glu-184. One can recognise a GMPS ATP-PPase domain in the interval Trp-209 to Arg-398. Ser-236–Ser-242 is a binding site for ATP.

Homodimer.

It catalyses the reaction XMP + L-glutamine + ATP + H2O = GMP + L-glutamate + AMP + diphosphate + 2 H(+). It participates in purine metabolism; GMP biosynthesis; GMP from XMP (L-Gln route): step 1/1. Its function is as follows. Catalyzes the synthesis of GMP from XMP. This Treponema denticola (strain ATCC 35405 / DSM 14222 / CIP 103919 / JCM 8153 / KCTC 15104) protein is GMP synthase [glutamine-hydrolyzing].